Consider the following 284-residue polypeptide: MASGLSEIGSTKMFDGYNKRYKHFSETLGCSMTFSIYFPPSASSSHKSPVLYWLSGLTCTDENFIIKSGAQRAASTHGIALVAPDTSPRGLNVEGEADSYDFGVGAGFYLNATQEKWKNWRMYDYVVKELPKLLSENFSQLDTTKASISGHSMGGHGALTIYLRNLDKYKSVSAFAPITNPINCAWGQKAFTNYLGDNKAAWEEYDATCLISKYNNLSATILIDQGENDQFYPDQLLPSKFEEACKKVNAPLLLRLHPGYDHSYYFIATFIEDHISHHAQALEL.

Residue Ala2 is modified to N-acetylalanine. Substrate is bound by residues Asn63 and Lys67. Catalysis depends on charge relay system residues Ser152, Asp229, and His262.

The protein belongs to the esterase D family. In terms of assembly, homodimer.

It catalyses the reaction S-formylglutathione + H2O = formate + glutathione + H(+). With respect to regulation, activity toward p-nitrophenyl acetate inhibited by N-ethylmaleimide, 10-(fluoroethoxyphosphinyl)-N-(biotinamidopentyl)decanamide (FP-biotin), iodoacetamide, CuCl(2) and ZnSO(4), but not by phenylmethylsulfonyl fluoride, EDTA, Mg(2+), Mn(2+), Ca(2+) or paraoxon, an organo-phosphate inhibitor of serine hydrolases. Functionally, serine hydrolase which catalyzes the hydrolysis of S-formylglutathione to glutathione and formic acid. Also hydrolyzes S-acetylglutathione and a range of carboxyesters in vitro. Involved in the detoxification of formaldehyde. The chain is S-formylglutathione hydrolase (SFGH) from Arabidopsis thaliana (Mouse-ear cress).